The primary structure comprises 208 residues: Outer-membrane lipoprotein carrier protein (208 aa).

The N-terminal stretch at 1–22 is a signal peptide; it reads MRKTLSILAISLPLLVSGYAQA.

This sequence belongs to the LolA family. In terms of assembly, monomer.

Its subcellular location is the periplasm. Its function is as follows. Participates in the translocation of lipoproteins from the inner membrane to the outer membrane. Only forms a complex with a lipoprotein if the residue after the N-terminal Cys is not an aspartate (The Asp acts as a targeting signal to indicate that the lipoprotein should stay in the inner membrane). In Shewanella sediminis (strain HAW-EB3), this protein is Outer-membrane lipoprotein carrier protein.